The following is a 223-amino-acid chain: Chalcone--flavanone isomerase 2 (223 aa).

3 residues coordinate substrate: Thr41, Asn106, and Ser183.

It belongs to the chalcone isomerase family.

It carries out the reaction a chalcone = a flavanone.. The protein operates within secondary metabolite biosynthesis; flavonoid biosynthesis. In terms of biological role, catalyzes the intramolecular cyclization of bicyclic chalcones into tricyclic (S)-flavanones. Responsible for the isomerization of 4,2',4',6'-tetrahydroxychalcone (also termed chalcone) into naringenin. In Arabidopsis thaliana (Mouse-ear cress), this protein is Chalcone--flavanone isomerase 2 (CHI2).